A 263-amino-acid chain; its full sequence is Phosphoinositide-3-kinase-interacting protein 1 (263 aa).

The first 21 residues, 1–21 (MLLAWVQAFLVSNMLLAEAYG), serve as a signal peptide directing secretion. The Extracellular segment spans residues 22-168 (SGGCFWDNGH…NSKEKKDLGT (147 aa)). The region spanning 24 to 101 (GCFWDNGHLY…EKRPCEDLRC (78 aa)) is the Kringle domain. Cystine bridges form between Cys25/Cys101, Cys46/Cys82, and Cys70/Cys96. O-linked (GalNAc...) serine glycosylation is present at Ser39. A glycan (N-linked (GlcNAc...) (complex) asparagine) is linked at Asn66. The helical transmembrane segment at 169-189 (LGYVLGITMMVIIIAIGAGII) threads the bilayer. The Cytoplasmic portion of the chain corresponds to 190–263 (LGYSYKRGKD…LMGQAGTPGA (74 aa)). The segment covering 242–251 (QTPVDPQEGT) has biased composition (polar residues). The segment at 242–263 (QTPVDPQEGTTPLMGQAGTPGA) is disordered.

N- and O-glycosylated. O-glycosylated with core 1 or possibly core 8 glycans. N-glycan heterogeneity at Asn-66: dHex1Hex5HexNAc4 (major) and dHex1Hex6HexNAc5 (minor).

It is found in the cell membrane. Functionally, negative regulator of hepatic phosphatidylinositol 3-kinase (PI3K) activity. This is Phosphoinositide-3-kinase-interacting protein 1 (PIK3IP1) from Homo sapiens (Human).